Consider the following 206-residue polypeptide: Holliday junction branch migration complex subunit RuvA (206 aa).

A domain I region spans residues 1-62 (MYDYLKGLIT…EDAQVLYGFP (62 aa)). Residues 63–141 (NLDQRELFRK…SLLETIELPS (79 aa)) form a domain II region. Positions 142–152 (TEDELPLFGVH) are flexible linker. The tract at residues 153–206 (PYKHELEEAILALAALGYSEKELEKIRPLLEDNDKLETTDAYMKQALQLLLKLK) is domain III.

The protein belongs to the RuvA family. In terms of assembly, homotetramer. Forms an RuvA(8)-RuvB(12)-Holliday junction (HJ) complex. HJ DNA is sandwiched between 2 RuvA tetramers; dsDNA enters through RuvA and exits via RuvB. An RuvB hexamer assembles on each DNA strand where it exits the tetramer. Each RuvB hexamer is contacted by two RuvA subunits (via domain III) on 2 adjacent RuvB subunits; this complex drives branch migration. In the full resolvosome a probable DNA-RuvA(4)-RuvB(12)-RuvC(2) complex forms which resolves the HJ.

Its subcellular location is the cytoplasm. In terms of biological role, the RuvA-RuvB-RuvC complex processes Holliday junction (HJ) DNA during genetic recombination and DNA repair, while the RuvA-RuvB complex plays an important role in the rescue of blocked DNA replication forks via replication fork reversal (RFR). RuvA specifically binds to HJ cruciform DNA, conferring on it an open structure. The RuvB hexamer acts as an ATP-dependent pump, pulling dsDNA into and through the RuvAB complex. HJ branch migration allows RuvC to scan DNA until it finds its consensus sequence, where it cleaves and resolves the cruciform DNA. The polypeptide is Holliday junction branch migration complex subunit RuvA (Lysinibacillus sphaericus (strain C3-41)).